Here is a 249-residue protein sequence, read N- to C-terminus: ATP synthase subunit a, chloroplastic (249 aa).

The next 5 helical transmembrane spans lie at Gln-40 to Val-60, Val-97 to Leu-117, Ile-136 to Ser-156, Leu-201 to Leu-221, and Gly-222 to Gly-242.

Belongs to the ATPase A chain family. As to quaternary structure, F-type ATPases have 2 components, CF(1) - the catalytic core - and CF(0) - the membrane proton channel. CF(1) has five subunits: alpha(3), beta(3), gamma(1), delta(1), epsilon(1). CF(0) has four main subunits: a, b, b' and c.

It localises to the plastid. The protein resides in the chloroplast thylakoid membrane. Functionally, key component of the proton channel; it plays a direct role in the translocation of protons across the membrane. In Aethionema grandiflorum (Persian stone-cress), this protein is ATP synthase subunit a, chloroplastic.